Reading from the N-terminus, the 370-residue chain is Cysteine synthase 1 (370 aa).

A mitochondrion-targeting transit peptide spans 1–16 (MFRQSVRRFATAALRS). K73 is subject to N6-(pyridoxal phosphate)lysine. Residues N103, 209-213 (GTGGT), and S308 contribute to the pyridoxal 5'-phosphate site.

Belongs to the cysteine synthase/cystathionine beta-synthase family. Pyridoxal 5'-phosphate serves as cofactor.

It is found in the mitochondrion. The enzyme catalyses O-succinyl-L-serine + hydrogen sulfide = L-cysteine + succinate. The catalysed reaction is O-acetyl-L-serine + hydrogen sulfide = L-cysteine + acetate. It functions in the pathway amino-acid biosynthesis; L-cysteine biosynthesis; L-cysteine from L-serine: step 2/2. Catalyzes the conversion of O-succinyl-L-serine into cysteine, the last step in the cysteine biosynthesis pathway. Can also use O-acetyl-L-serine. The polypeptide is Cysteine synthase 1 (Emericella nidulans (strain FGSC A4 / ATCC 38163 / CBS 112.46 / NRRL 194 / M139) (Aspergillus nidulans)).